Reading from the N-terminus, the 143-residue chain is MATGKTVKDVSPHEFVKAYAAHLKRSGKIELPLWTDIVKTGKLKELAPYDPDWYYIRAASMARKVYLRGGLGVGAFRRIYGGSKRNGSRPPHFCKSSGGVARHILQQLQTMNIVDLDTKGGRKITSSGQRDLDQVAGRIAAAV.

This sequence belongs to the eukaryotic ribosomal protein eS19 family.

The polypeptide is Small ribosomal subunit protein eS19x (RPS19C) (Arabidopsis thaliana (Mouse-ear cress)).